The sequence spans 142 residues: Ribosome maturation factor RimP (142 aa).

It belongs to the RimP family.

The protein localises to the cytoplasm. In terms of biological role, required for maturation of 30S ribosomal subunits. This Sulfurovum sp. (strain NBC37-1) protein is Ribosome maturation factor RimP.